The chain runs to 502 residues: ATP synthase subunit alpha (502 aa).

169-176 (GDRQTGKT) lines the ATP pocket.

It belongs to the ATPase alpha/beta chains family. F-type ATPases have 2 components, CF(1) - the catalytic core - and CF(0) - the membrane proton channel. CF(1) has five subunits: alpha(3), beta(3), gamma(1), delta(1), epsilon(1). CF(0) has three main subunits: a(1), b(2) and c(9-12). The alpha and beta chains form an alternating ring which encloses part of the gamma chain. CF(1) is attached to CF(0) by a central stalk formed by the gamma and epsilon chains, while a peripheral stalk is formed by the delta and b chains.

The protein resides in the cell membrane. The enzyme catalyses ATP + H2O + 4 H(+)(in) = ADP + phosphate + 5 H(+)(out). In terms of biological role, produces ATP from ADP in the presence of a proton gradient across the membrane. The alpha chain is a regulatory subunit. This chain is ATP synthase subunit alpha, found in Streptococcus pyogenes serotype M12 (strain MGAS9429).